Reading from the N-terminus, the 216-residue chain is Redox-sensing transcriptional repressor Rex (216 aa).

The H-T-H motif DNA-binding region spans 17-56; sequence IYFRYLTFLHDAGTDRISSAELSDAIKFDAATIRRDFSYF. NAD(+) is bound at residue 91 to 96; it reads GAGNLG.

Belongs to the transcriptional regulatory Rex family. As to quaternary structure, homodimer.

It is found in the cytoplasm. Its function is as follows. Modulates transcription in response to changes in cellular NADH/NAD(+) redox state. The protein is Redox-sensing transcriptional repressor Rex of Leuconostoc citreum (strain KM20).